Here is a 156-residue protein sequence, read N- to C-terminus: MNLKQIDTIKEKIQPILSEKHLLLWDLSFFGGSPAVLTILIDGQDHQAIRMNQISEVTSLISDALDKVEPDPFPDRYNLDISSPGIDRSIKTDEHLDWALGQPIKLNLFEKIDGSKSAEGILKSFSDLEISLEVSPAEVKNFPREKISKISLNQEA.

This sequence belongs to the RimP family.

The protein localises to the cytoplasm. In terms of biological role, required for maturation of 30S ribosomal subunits. The polypeptide is Ribosome maturation factor RimP (Oenococcus oeni (strain ATCC BAA-331 / PSU-1)).